Consider the following 518-residue polypeptide: Squalene monooxygenase 1,2 (518 aa).

The next 2 membrane-spanning stretches (helical) occupy residues 3–23 (MAFVEVCLRMLLVFVLSWTIF) and 48–68 (GPDVIIVGAGVGGSALAYALA). FAD is bound by residues 58–59 (VG), 78–79 (ER), R86, F91, R158, V174, D337, and M350. The helical transmembrane segment at 448–468 (LFYHLFVISLSSIGQLLSPFP) threads the bilayer.

Belongs to the squalene monooxygenase family. The cofactor is FAD.

Its subcellular location is the membrane. It catalyses the reaction squalene + reduced [NADPH--hemoprotein reductase] + O2 = (S)-2,3-epoxysqualene + oxidized [NADPH--hemoprotein reductase] + H2O + H(+). The protein operates within terpene metabolism; lanosterol biosynthesis; lanosterol from farnesyl diphosphate: step 2/3. Functionally, catalyzes the stereospecific oxidation of squalene to (S)-2,3-epoxysqualene, and is considered to be a rate-limiting enzyme in steroid biosynthesis. This chain is Squalene monooxygenase 1,2 (SQP1,2), found in Brassica napus (Rape).